The primary structure comprises 433 residues: Probable mannose-6-phosphate isomerase (433 aa).

4 residues coordinate Zn(2+): glutamine 103, histidine 105, glutamate 130, and histidine 277. Arginine 296 is a catalytic residue.

It belongs to the mannose-6-phosphate isomerase type 1 family. It depends on Zn(2+) as a cofactor.

It localises to the cytoplasm. It carries out the reaction D-mannose 6-phosphate = D-fructose 6-phosphate. Its pathway is nucleotide-sugar biosynthesis; GDP-alpha-D-mannose biosynthesis; alpha-D-mannose 1-phosphate from D-fructose 6-phosphate: step 1/2. Its function is as follows. Involved in the synthesis of the GDP-mannose and dolichol-phosphate-mannose required for a number of critical mannosyl transfer reactions. This chain is Probable mannose-6-phosphate isomerase (PMIH), found in Echinococcus multilocularis (Fox tapeworm).